A 525-amino-acid polypeptide reads, in one-letter code: GMP synthase [glutamine-hydrolyzing] (525 aa).

A Glutamine amidotransferase type-1 domain is found at 9-207; it reads RILILDFGSQ…VLDICGCEAL (199 aa). The Nucleophile role is filled by Cys86. Active-site residues include His181 and Glu183. A GMPS ATP-PPase domain is found at 208–400; it reads WTPSKIAEDA…LGLPYDMVYR (193 aa). 235–241 lines the ATP pocket; it reads SGGVDSS.

Homodimer.

The enzyme catalyses XMP + L-glutamine + ATP + H2O = GMP + L-glutamate + AMP + diphosphate + 2 H(+). It functions in the pathway purine metabolism; GMP biosynthesis; GMP from XMP (L-Gln route): step 1/1. Catalyzes the synthesis of GMP from XMP. This Pseudomonas fluorescens (strain Pf0-1) protein is GMP synthase [glutamine-hydrolyzing].